A 952-amino-acid polypeptide reads, in one-letter code: Translation initiation factor IF-2 (952 aa).

Disordered stretches follow at residues 74–95, 153–204, 230–256, and 273–319; these read QRRL…RQLK, AAQA…KEEP, MHSP…EQAD, and DEKG…DVND. Over residues 153-168 the composition is skewed to low complexity; it reads AAQADQTDQTDQTDQA. Residues 232–242 show a composition bias toward basic and acidic residues; it reads SPFDRSSEAER. Over residues 286-303 the composition is skewed to low complexity; that stretch reads PGETNAATPAGTASTAGA. In terms of domain architecture, tr-type G spans 449–619; it reads IRPPVITIMG…LAEAEIRELK (171 aa). The interval 458 to 465 is G1; sequence GHVDHGKT. A GTP-binding site is contributed by 458–465; it reads GHVDHGKT. A G2 region spans residues 483–487; sequence GITQH. The interval 505-508 is G3; that stretch reads DTPG. GTP is bound by residues 505 to 509 and 559 to 562; these read DTPGH and NKVD. Positions 559 to 562 are G4; it reads NKVD. Residues 595–597 form a G5 region; that stretch reads SAK.

Belongs to the TRAFAC class translation factor GTPase superfamily. Classic translation factor GTPase family. IF-2 subfamily.

It is found in the cytoplasm. In terms of biological role, one of the essential components for the initiation of protein synthesis. Protects formylmethionyl-tRNA from spontaneous hydrolysis and promotes its binding to the 30S ribosomal subunits. Also involved in the hydrolysis of GTP during the formation of the 70S ribosomal complex. This Chlorobium limicola (strain DSM 245 / NBRC 103803 / 6330) protein is Translation initiation factor IF-2.